The chain runs to 112 residues: Large ribosomal subunit protein P2 (112 aa).

Over residues 69 to 85 (AGGAAMPAAAAGGAPAA) the composition is skewed to low complexity. The disordered stretch occupies residues 69–112 (AGGAAMPAAAAGGAPAAAEDKAEAKKPEAEPEEEEDDMGFSLFD). Basic and acidic residues predominate over residues 86–97 (AEDKAEAKKPEA).

This sequence belongs to the eukaryotic ribosomal protein P1/P2 family. As to quaternary structure, P1 and P2 exist as dimers at the large ribosomal subunit. In terms of processing, phosphorylated.

Functionally, plays an important role in the elongation step of protein synthesis. This Babesia bovis protein is Large ribosomal subunit protein P2.